The chain runs to 400 residues: Nicotinate phosphoribosyltransferase (400 aa).

Phosphohistidine; by autocatalysis is present on H220.

The protein belongs to the NAPRTase family. Post-translationally, transiently phosphorylated on a His residue during the reaction cycle. Phosphorylation strongly increases the affinity for substrates and increases the rate of nicotinate D-ribonucleotide production. Dephosphorylation regenerates the low-affinity form of the enzyme, leading to product release.

It carries out the reaction nicotinate + 5-phospho-alpha-D-ribose 1-diphosphate + ATP + H2O = nicotinate beta-D-ribonucleotide + ADP + phosphate + diphosphate. It functions in the pathway cofactor biosynthesis; NAD(+) biosynthesis; nicotinate D-ribonucleotide from nicotinate: step 1/1. Catalyzes the synthesis of beta-nicotinate D-ribonucleotide from nicotinate and 5-phospho-D-ribose 1-phosphate at the expense of ATP. The polypeptide is Nicotinate phosphoribosyltransferase (Shigella boydii serotype 18 (strain CDC 3083-94 / BS512)).